Here is a 215-residue protein sequence, read N- to C-terminus: DNA polymerase III subunit epsilon (215 aa).

D19 and E21 together coordinate a divalent metal cation. Positions 19, 21, 62, and 67 each coordinate substrate. H160 serves as the catalytic Proton acceptor. An a divalent metal cation-binding site is contributed by D165. D165 lines the substrate pocket.

DNA polymerase III contains a core (composed of alpha, epsilon and theta chains) that associates with a tau subunit. This core dimerizes to form the POLIII' complex. PolIII' associates with the gamma complex (composed of gamma, delta, delta', psi and chi chains) and with the beta chain to form the complete DNA polymerase III complex. The cofactor is Mg(2+). Mn(2+) serves as cofactor.

It catalyses the reaction DNA(n) + a 2'-deoxyribonucleoside 5'-triphosphate = DNA(n+1) + diphosphate. Its function is as follows. DNA polymerase III is a complex, multichain enzyme responsible for most of the replicative synthesis in bacteria. The epsilon subunit contain the editing function and is a proofreading 3'-5' exonuclease. This Treponema pallidum (strain Nichols) protein is DNA polymerase III subunit epsilon (dnaQ).